Here is a 168-residue protein sequence, read N- to C-terminus: Transcription antitermination protein NusB (168 aa).

This sequence belongs to the NusB family.

In terms of biological role, involved in transcription antitermination. Required for transcription of ribosomal RNA (rRNA) genes. Binds specifically to the boxA antiterminator sequence of the ribosomal RNA (rrn) operons. This Brucella anthropi (strain ATCC 49188 / DSM 6882 / CCUG 24695 / JCM 21032 / LMG 3331 / NBRC 15819 / NCTC 12168 / Alc 37) (Ochrobactrum anthropi) protein is Transcription antitermination protein NusB.